Consider the following 350-residue polypeptide: Fe-S cluster assembly protein dre2 (350 aa).

An N-terminal SAM-like domain region spans residues 23–156 (TSFNLRTLLL…KPDHSASVAV (134 aa)). A linker region spans residues 157–242 (PLRLRRKDNS…EDTLLTEEDM (86 aa)). Positions 165–209 (NSKTTAVSNAGPPVSTVEVPVSGKRKSVDMTEDVPEKDVPKNDVP) are disordered. Residues 190–208 (KSVDMTEDVPEKDVPKNDV) show a composition bias toward basic and acidic residues. [2Fe-2S] cluster contacts are provided by C252, C263, C266, and C268. The interval 252–268 (CAPRAGKRRRACKDCTC) is fe-S binding site A. Positions 313, 316, 324, and 327 each coordinate [4Fe-4S] cluster. 2 consecutive short sequence motifs (cx2C motif) follow at residues 313–316 (CGNC) and 324–327 (CDGC). The segment at 313-327 (CGNCSLGDAFRCDGC) is fe-S binding site B.

The protein belongs to the anamorsin family. In terms of assembly, monomer. Interacts with TAH18. Interacts with MIA40. [2Fe-2S] cluster serves as cofactor. [4Fe-4S] cluster is required as a cofactor.

It localises to the cytoplasm. Its subcellular location is the mitochondrion intermembrane space. Functionally, component of the cytosolic iron-sulfur (Fe-S) protein assembly (CIA) machinery required for the maturation of extramitochondrial Fe-S proteins. Part of an electron transfer chain functioning in an early step of cytosolic Fe-S biogenesis, facilitating the de novo assembly of a [4Fe-4S] cluster on the scaffold complex CFD1-NBP35. Electrons are transferred to DRE2 from NADPH via the FAD- and FMN-containing protein TAH18. TAH18-DRE2 are also required for the assembly of the diferric tyrosyl radical cofactor of ribonucleotide reductase (RNR), probably by providing electrons for reduction during radical cofactor maturation in the catalytic small subunit RNR2. This Sclerotinia sclerotiorum (strain ATCC 18683 / 1980 / Ss-1) (White mold) protein is Fe-S cluster assembly protein dre2.